A 363-amino-acid chain; its full sequence is Ferrochelatase (363 aa).

Residues histidine 209 and glutamate 290 each contribute to the Fe cation site.

Belongs to the ferrochelatase family.

It is found in the cytoplasm. The enzyme catalyses heme b + 2 H(+) = protoporphyrin IX + Fe(2+). Its pathway is porphyrin-containing compound metabolism; protoheme biosynthesis; protoheme from protoporphyrin-IX: step 1/1. Functionally, catalyzes the ferrous insertion into protoporphyrin IX. The protein is Ferrochelatase of Azoarcus sp. (strain BH72).